The sequence spans 255 residues: Zinc finger CCCH domain-containing protein 37 (255 aa).

2 consecutive C3H1-type zinc fingers follow at residues 98–128 (AYTG…HGTF) and 137–159 (YRTR…AHTA).

The protein is Zinc finger CCCH domain-containing protein 37 of Oryza sativa subsp. japonica (Rice).